A 108-amino-acid chain; its full sequence is Trp operon repressor homolog (108 aa).

Residues glutamine 59–serine 82 mediate DNA binding.

It belongs to the TrpR family. As to quaternary structure, homodimer.

The protein localises to the cytoplasm. In terms of biological role, this protein is an aporepressor. When complexed with L-tryptophan it binds the operator region of the trp operon and prevents the initiation of transcription. This chain is Trp operon repressor homolog, found in Aliivibrio fischeri (strain MJ11) (Vibrio fischeri).